The sequence spans 200 residues: Protein GrpE (200 aa).

The segment covering 1 to 27 has biased composition (basic and acidic residues); that stretch reads MTKQEKAENQEKPTEETVEETPKKETP. The disordered stretch occupies residues 1–50; the sequence is MTKQEKAENQEKPTEETVEETPKKETPFEPVMEADEVEETTEAQAPVEEA. Over residues 32–41 the composition is skewed to acidic residues; it reads MEADEVEETT.

The protein belongs to the GrpE family. Homodimer.

It localises to the cytoplasm. In terms of biological role, participates actively in the response to hyperosmotic and heat shock by preventing the aggregation of stress-denatured proteins, in association with DnaK and GrpE. It is the nucleotide exchange factor for DnaK and may function as a thermosensor. Unfolded proteins bind initially to DnaJ; upon interaction with the DnaJ-bound protein, DnaK hydrolyzes its bound ATP, resulting in the formation of a stable complex. GrpE releases ADP from DnaK; ATP binding to DnaK triggers the release of the substrate protein, thus completing the reaction cycle. Several rounds of ATP-dependent interactions between DnaJ, DnaK and GrpE are required for fully efficient folding. This chain is Protein GrpE, found in Latilactobacillus sakei subsp. sakei (strain 23K) (Lactobacillus sakei subsp. sakei).